A 462-amino-acid polypeptide reads, in one-letter code: Zinc finger CCCH domain-containing protein 34 (462 aa).

A compositionally biased stretch (basic and acidic residues) spans 1–13 (MERYGRPGEEGSR). The interval 1–26 (MERYGRPGEEGSRSDPSLEWTSHGGE) is disordered. C3H1-type zinc fingers lie at residues 54-82 (RPDEPDCIYYLRTGVCGYGSRCRFNHPRD), 100-128 (RMGHPVCQHFMRTGTCKFGASCKYHHPRQ), and 148-176 (RPGEKECSYYLRTGQCKFGLTCRFNHPVP). A compositionally biased stretch (polar residues) spans 288–303 (TGTYQSVPSSNSTSKE). The interval 288-310 (TGTYQSVPSSNSTSKEFPQRPDQ) is disordered. 2 consecutive C3H1-type zinc fingers follow at residues 307–335 (RPDQPECQYFMRTGDCKFGSSCRYHHPVD) and 353–381 (RPGVAQCTHFAQHGICKFGPACKFDHSMS). The span at 405–418 (SSSLSGSSAPVSSS) shows a compositional bias: low complexity. Residues 405-462 (SSSLSGSSAPVSSSNEPTKEAVTPAVSSMVSGLSRPEPAETSGDSASVSGSIEAKTSS) form a disordered region. A compositionally biased stretch (polar residues) spans 446–462 (SGDSASVSGSIEAKTSS).

Its subcellular location is the nucleus. This Arabidopsis thaliana (Mouse-ear cress) protein is Zinc finger CCCH domain-containing protein 34.